Here is a 101-residue protein sequence, read N- to C-terminus: Large ribosomal subunit protein P1 (101 aa).

The tract at residues 65–89 is disordered; it reads AAPAAAPAEEPKEEKKEEKKEEDTT. Residues 73–87 show a composition bias toward basic and acidic residues; sequence EEPKEEKKEEKKEED.

This sequence belongs to the eukaryotic ribosomal protein P1/P2 family. In terms of assembly, part of the 50S ribosomal subunit. Homodimer, it forms part of the ribosomal stalk which helps the ribosome interact with GTP-bound translation factors. Forms a heptameric uL10/P0(P1)2(P1)2(P1)2 complex, where uL10/P0 forms an elongated spine to which the P1 dimers bind in a sequential fashion.

Its function is as follows. Forms part of the ribosomal stalk, playing a central role in the interaction of the ribosome with GTP-bound translation factors. This Methanothermococcus thermolithotrophicus (Methanococcus thermolithotrophicus) protein is Large ribosomal subunit protein P1.